The primary structure comprises 236 residues: 2-C-methyl-D-erythritol 4-phosphate cytidylyltransferase (236 aa).

This sequence belongs to the IspD/TarI cytidylyltransferase family. IspD subfamily. Homodimer.

It carries out the reaction 2-C-methyl-D-erythritol 4-phosphate + CTP + H(+) = 4-CDP-2-C-methyl-D-erythritol + diphosphate. It participates in isoprenoid biosynthesis; isopentenyl diphosphate biosynthesis via DXP pathway; isopentenyl diphosphate from 1-deoxy-D-xylulose 5-phosphate: step 2/6. In terms of biological role, catalyzes the formation of 4-diphosphocytidyl-2-C-methyl-D-erythritol from CTP and 2-C-methyl-D-erythritol 4-phosphate (MEP). This Salmonella schwarzengrund (strain CVM19633) protein is 2-C-methyl-D-erythritol 4-phosphate cytidylyltransferase.